The chain runs to 119 residues: NAD(P)H-quinone oxidoreductase subunit M (119 aa).

The protein belongs to the complex I NdhM subunit family. In terms of assembly, NDH-1 can be composed of about 15 different subunits; different subcomplexes with different compositions have been identified which probably have different functions.

It is found in the cell inner membrane. The catalysed reaction is a plastoquinone + NADH + (n+1) H(+)(in) = a plastoquinol + NAD(+) + n H(+)(out). It catalyses the reaction a plastoquinone + NADPH + (n+1) H(+)(in) = a plastoquinol + NADP(+) + n H(+)(out). Its function is as follows. NDH-1 shuttles electrons from an unknown electron donor, via FMN and iron-sulfur (Fe-S) centers, to quinones in the respiratory and/or the photosynthetic chain. The immediate electron acceptor for the enzyme in this species is believed to be plastoquinone. Couples the redox reaction to proton translocation, and thus conserves the redox energy in a proton gradient. Cyanobacterial NDH-1 also plays a role in inorganic carbon-concentration. The protein is NAD(P)H-quinone oxidoreductase subunit M of Gloeobacter violaceus (strain ATCC 29082 / PCC 7421).